A 400-amino-acid polypeptide reads, in one-letter code: Acetate kinase (400 aa).

Asn-10 is a binding site for Mg(2+). Residue Lys-17 coordinates ATP. A substrate-binding site is contributed by Arg-91. Asp-150 functions as the Proton donor/acceptor in the catalytic mechanism. Residues 210–214, 285–287, and 333–337 contribute to the ATP site; these read HLGNG, DCR, and GIGEN. Glu-387 is a Mg(2+) binding site.

It belongs to the acetokinase family. Homodimer. Requires Mg(2+) as cofactor. Mn(2+) serves as cofactor.

Its subcellular location is the cytoplasm. It catalyses the reaction acetate + ATP = acetyl phosphate + ADP. It participates in metabolic intermediate biosynthesis; acetyl-CoA biosynthesis; acetyl-CoA from acetate: step 1/2. Its function is as follows. Catalyzes the formation of acetyl phosphate from acetate and ATP. Can also catalyze the reverse reaction. The sequence is that of Acetate kinase from Serratia proteamaculans (strain 568).